A 222-amino-acid chain; its full sequence is FCS-Like Zinc finger 13 (222 aa).

The FLZ-type zinc finger occupies Glu149–Glu192.

Belongs to the FLZ family. Interacts with KIN10 and KIN11 via its FLZ-type zinc finger domain. Interacts with KINB1, KINB2, KINB3 and SNF4 via its N-terminal part.

It localises to the nucleus. It is found in the cytoplasm. In terms of biological role, may act as an adapter to facilitate the interaction of SnRK1 complex with effector proteins, conferring tissue- and stimulus-type specific differences in the SnRK1 regulation pathway. The protein is FCS-Like Zinc finger 13 of Arabidopsis thaliana (Mouse-ear cress).